The chain runs to 131 residues: Sec-independent protein translocase protein TatB (131 aa).

Residues 2-22 traverse the membrane as a helical segment; the sequence is FANIGWWEMLVLVMVGLVVLG. The interval 90–131 is disordered; the sequence is DSLFTGDFDRPTPKKPDAAGSAGPDATEQIGAGPIPFDSDAT. The span at 96 to 106 shows a compositional bias: basic and acidic residues; the sequence is DFDRPTPKKPD.

It belongs to the TatB family. In terms of assembly, the Tat system comprises two distinct complexes: a TatABC complex, containing multiple copies of TatA, TatB and TatC subunits, and a separate TatA complex, containing only TatA subunits. Substrates initially bind to the TatABC complex, which probably triggers association of the separate TatA complex to form the active translocon.

It is found in the cell membrane. Functionally, part of the twin-arginine translocation (Tat) system that transports large folded proteins containing a characteristic twin-arginine motif in their signal peptide across membranes. Together with TatC, TatB is part of a receptor directly interacting with Tat signal peptides. TatB may form an oligomeric binding site that transiently accommodates folded Tat precursor proteins before their translocation. The protein is Sec-independent protein translocase protein TatB of Mycobacterium tuberculosis (strain ATCC 25177 / H37Ra).